Consider the following 150-residue polypeptide: Large ribosomal subunit protein bL9 (150 aa).

This sequence belongs to the bacterial ribosomal protein bL9 family.

In terms of biological role, binds to the 23S rRNA. In Polynucleobacter asymbioticus (strain DSM 18221 / CIP 109841 / QLW-P1DMWA-1) (Polynucleobacter necessarius subsp. asymbioticus), this protein is Large ribosomal subunit protein bL9.